The chain runs to 602 residues: Type 2 DNA topoisomerase 6 subunit B (602 aa).

ATP-binding positions include asparagine 40, aspartate 71, 92–93 (SR), 102–109 (GQQGIGIS), and lysine 425.

This sequence belongs to the TOP6B family. As to quaternary structure, homodimer. Heterotetramer of two Top6A and two Top6B chains.

The enzyme catalyses ATP-dependent breakage, passage and rejoining of double-stranded DNA.. In terms of biological role, relaxes both positive and negative superturns and exhibits a strong decatenase activity. This is Type 2 DNA topoisomerase 6 subunit B from Archaeoglobus fulgidus (strain ATCC 49558 / DSM 4304 / JCM 9628 / NBRC 100126 / VC-16).